Reading from the N-terminus, the 276-residue chain is Type II pantothenate kinase (276 aa).

ATP is bound at residue 8-15 (DAGGTLTK). Catalysis depends on glutamate 76, which acts as the Proton acceptor. ATP contacts are provided by residues threonine 105, 127 to 131 (GGTIM), phenylalanine 143, and serine 230.

It belongs to the type II pantothenate kinase family. Homodimer.

The protein resides in the cytoplasm. It carries out the reaction (R)-pantothenate + ATP = (R)-4'-phosphopantothenate + ADP + H(+). The protein operates within cofactor biosynthesis; coenzyme A biosynthesis; CoA from (R)-pantothenate: step 1/5. In terms of biological role, catalyzes the phosphorylation of pantothenate (Pan), the first step in CoA biosynthesis. The chain is Type II pantothenate kinase from Bacillus cereus (strain ZK / E33L).